Consider the following 64-residue polypeptide: MKNNTILFTFLIVFLIASQIEAINWDILIDTIKDKLGKRSEDREFFDFFTDDNLAALEKALKEY.

The N-terminal stretch at M1–A22 is a signal peptide. Residue L36 is modified to Leucine amide. Positions S40–Y64 are excised as a propeptide.

The protein belongs to the non-disulfide-bridged peptide (NDBP) superfamily. Short antimicrobial peptide (group 4) family. As to expression, expressed by the venom gland.

The protein resides in the secreted. Its function is as follows. Antimicrobial peptide. The chain is Peptide Ctri9677 from Chaerilus tricostatus (Scorpion).